We begin with the raw amino-acid sequence, 342 residues long: Zinc transporter ZIP11 (342 aa).

The next 7 membrane-spanning stretches (helical) occupy residues 12 to 32 (LLGT…VFIF), 44 to 64 (LGFA…APAV), 72 to 92 (GFGA…AAFV), 194 to 214 (IALL…AVGV), 263 to 285 (FWYG…FAVV), 290 to 307 (ILPY…YVVM), and 322 to 342 (LASW…VGLG).

The protein belongs to the ZIP transporter (TC 2.A.5) family. In terms of tissue distribution, highly expressed in the testes and portions of the digestive system including the stomach, ileum and cecum. In contrast, expressed at very low levels in liver, duodenum, jejunum, and colon.

It is found in the cell membrane. It localises to the nucleus. The protein resides in the cytoplasm. Its subcellular location is the golgi apparatus. It carries out the reaction Zn(2+)(in) = Zn(2+)(out). It catalyses the reaction Cu(2+)(in) = Cu(2+)(out). Zinc importer that regulates cytosolic zinc concentration either via zinc influx from the extracellular compartment or efflux from intracellular organelles such as Golgi apparatus. May transport copper ions as well. The transport mechanism remains to be elucidated. The chain is Zinc transporter ZIP11 (Slc39a11) from Mus musculus (Mouse).